Consider the following 547-residue polypeptide: Chaperonin GroEL (547 aa).

ATP contacts are provided by residues 30–33 (TLGP), Lys51, 87–91 (DGTTT), Gly414, 478–480 (NAA), and Asp494.

The protein belongs to the chaperonin (HSP60) family. Forms a cylinder of 14 subunits composed of two heptameric rings stacked back-to-back. Interacts with the co-chaperonin GroES.

It is found in the cytoplasm. It catalyses the reaction ATP + H2O + a folded polypeptide = ADP + phosphate + an unfolded polypeptide.. Together with its co-chaperonin GroES, plays an essential role in assisting protein folding. The GroEL-GroES system forms a nano-cage that allows encapsulation of the non-native substrate proteins and provides a physical environment optimized to promote and accelerate protein folding. The sequence is that of Chaperonin GroEL from Klebsiella pneumoniae.